Reading from the N-terminus, the 196-residue chain is Endonuclease V (196 aa).

Residues Asp-37 and Asp-98 each coordinate Mg(2+).

Belongs to the endonuclease V family. It depends on Mg(2+) as a cofactor.

The protein resides in the cytoplasm. The catalysed reaction is Endonucleolytic cleavage at apurinic or apyrimidinic sites to products with a 5'-phosphate.. Its function is as follows. DNA repair enzyme involved in the repair of deaminated bases. Selectively cleaves double-stranded DNA at the second phosphodiester bond 3' to a deoxyinosine leaving behind the intact lesion on the nicked DNA. The chain is Endonuclease V from Sulfolobus acidocaldarius (strain ATCC 33909 / DSM 639 / JCM 8929 / NBRC 15157 / NCIMB 11770).